Here is a 177-residue protein sequence, read N- to C-terminus: Large ribosomal subunit protein uL6 (177 aa).

This sequence belongs to the universal ribosomal protein uL6 family. In terms of assembly, part of the 50S ribosomal subunit.

Functionally, this protein binds to the 23S rRNA, and is important in its secondary structure. It is located near the subunit interface in the base of the L7/L12 stalk, and near the tRNA binding site of the peptidyltransferase center. This chain is Large ribosomal subunit protein uL6, found in Methylibium petroleiphilum (strain ATCC BAA-1232 / LMG 22953 / PM1).